We begin with the raw amino-acid sequence, 571 residues long: La-related protein 7 (571 aa).

At M1 the chain carries N-acetylmethionine. Residues M1–K17 show a composition bias toward basic and acidic residues. Disordered regions lie at residues M1–R25 and L181–K366. In terms of domain architecture, HTH La-type RNA-binding spans R23 to E117. Residues R120–T198 enclose the RRM domain. Over residues K214–I223 the composition is skewed to basic residues. K232 participates in a covalent cross-link: Glycyl lysine isopeptide (Lys-Gly) (interchain with G-Cter in SUMO2). At T252 the chain carries Phosphothreonine. 2 positions are modified to phosphoserine: S254 and S257. T261 is modified (phosphothreonine). The span at K287–A296 shows a compositional bias: basic and acidic residues. A phosphoserine mark is found at S294, S295, and S335. Phosphothreonine is present on T336. Positions P342–S351 are enriched in basic and acidic residues. Position 349 is a phosphoserine (S349). Residues K352–H365 are compositionally biased toward basic residues. K408 is covalently cross-linked (Glycyl lysine isopeptide (Lys-Gly) (interchain with G-Cter in SUMO2)). Positions S411 to K432 are disordered. Over residues S423–K432 the composition is skewed to polar residues. The xRRM domain maps to Q439–K552.

It belongs to the LARP7 family. As to quaternary structure, core component of the 7SK RNP complex, at least composed of 7SK RNA, LARP7, MEPCE, HEXIM1 (or HEXIM2) and P-TEFb (composed of CDK9 and CCNT1/cyclin-T1). Interacts with METTL16. Interacts with RBM7; upon genotoxic stress this interaction is enhanced, triggering the release of inactive P-TEFb complex from the core, yielding to P-TEFb complex activation. Associates with box C/D small nucleolar ribonucleoprotein (snoRNP) complexes.

The protein resides in the nucleus. It localises to the nucleoplasm. Its function is as follows. RNA-binding protein that specifically binds distinct small nuclear RNA (snRNAs) and regulates their processing and function. Specifically binds the 7SK snRNA (7SK RNA) and acts as a core component of the 7SK ribonucleoprotein (RNP) complex, thereby acting as a negative regulator of transcription elongation by RNA polymerase II. The 7SK RNP complex sequesters the positive transcription elongation factor b (P-TEFb) in a large inactive 7SK RNP complex preventing RNA polymerase II phosphorylation and subsequent transcriptional elongation. The 7SK RNP complex also promotes snRNA gene transcription by RNA polymerase II via interaction with the little elongation complex (LEC). LARP7 specifically binds to the highly conserved 3'-terminal U-rich stretch of 7SK RNA; on stimulation, remains associated with 7SK RNA, whereas P-TEFb is released from the complex. LARP7 also acts as a regulator of mRNA splicing fidelity by promoting U6 snRNA processing. Specifically binds U6 snRNAs and associates with a subset of box C/D RNP complexes: promotes U6 snRNA 2'-O-methylation by facilitating U6 snRNA loading into box C/D RNP complexes. U6 snRNA 2'-O-methylation is required for mRNA splicing fidelity. Binds U6 snRNAs with a 5'-CAGGG-3' sequence motif. U6 snRNA processing is required for spermatogenesis. The chain is La-related protein 7 from Rattus norvegicus (Rat).